The chain runs to 653 residues: ATP-dependent zinc metalloprotease FtsH 1 (653 aa).

The interval 1 to 20 (MPENKNDKENKNDKENKNTK) is disordered. Residues 1–30 (MPENKNDKENKNDKENKNTKEEKKKVKFSN) are Cytoplasmic-facing. The chain crosses the membrane as a helical span at residues 31–51 (IIWVYIIFAVFFIGALISLNW). Residues 52-126 (ENNPIISYSE…EYVESVGTKW (75 aa)) are Periplasmic-facing. Residues 127-147 (WFGLLINIIPIVVMVLFFFWL) traverse the membrane as a helical segment. The Cytoplasmic segment spans residues 148–653 (YRSASAGARS…VVNHVNYQPV (506 aa)). 219–226 (GPPGTGKT) is a binding site for ATP. Zn(2+) is bound at residue His441. Glu442 is an active-site residue. Zn(2+) contacts are provided by His445 and Asp518.

This sequence in the central section; belongs to the AAA ATPase family. In the C-terminal section; belongs to the peptidase M41 family. Homohexamer. Zn(2+) serves as cofactor.

The protein localises to the cell inner membrane. In terms of biological role, acts as a processive, ATP-dependent zinc metallopeptidase for both cytoplasmic and membrane proteins. Plays a role in the quality control of integral membrane proteins. The chain is ATP-dependent zinc metalloprotease FtsH 1 from Petrotoga mobilis (strain DSM 10674 / SJ95).